The sequence spans 515 residues: Histidine ammonia-lyase (515 aa).

Positions A145–G147 form a cross-link, 5-imidazolinone (Ala-Gly). S146 carries the post-translational modification 2,3-didehydroalanine (Ser).

The protein belongs to the PAL/histidase family. Post-translationally, contains an active site 4-methylidene-imidazol-5-one (MIO), which is formed autocatalytically by cyclization and dehydration of residues Ala-Ser-Gly.

The protein localises to the cytoplasm. It catalyses the reaction L-histidine = trans-urocanate + NH4(+). Its pathway is amino-acid degradation; L-histidine degradation into L-glutamate; N-formimidoyl-L-glutamate from L-histidine: step 1/3. The sequence is that of Histidine ammonia-lyase from Gluconacetobacter diazotrophicus (strain ATCC 49037 / DSM 5601 / CCUG 37298 / CIP 103539 / LMG 7603 / PAl5).